Consider the following 438-residue polypeptide: Thymidine phosphorylase (438 aa).

Belongs to the thymidine/pyrimidine-nucleoside phosphorylase family. Homodimer.

It catalyses the reaction thymidine + phosphate = 2-deoxy-alpha-D-ribose 1-phosphate + thymine. The protein operates within pyrimidine metabolism; dTMP biosynthesis via salvage pathway; dTMP from thymine: step 1/2. The enzymes which catalyze the reversible phosphorolysis of pyrimidine nucleosides are involved in the degradation of these compounds and in their utilization as carbon and energy sources, or in the rescue of pyrimidine bases for nucleotide synthesis. This chain is Thymidine phosphorylase, found in Burkholderia orbicola (strain AU 1054).